Reading from the N-terminus, the 286-residue chain is Release factor glutamine methyltransferase (286 aa).

S-adenosyl-L-methionine contacts are provided by residues 121-125 (GTGTG), Asp-144, Trp-172, and Asn-188. 188 to 191 (NPPY) serves as a coordination point for substrate.

This sequence belongs to the protein N5-glutamine methyltransferase family. PrmC subfamily.

The enzyme catalyses L-glutaminyl-[peptide chain release factor] + S-adenosyl-L-methionine = N(5)-methyl-L-glutaminyl-[peptide chain release factor] + S-adenosyl-L-homocysteine + H(+). Methylates the class 1 translation termination release factors RF1/PrfA and RF2/PrfB on the glutamine residue of the universally conserved GGQ motif. In Vibrio cholerae serotype O1 (strain ATCC 39315 / El Tor Inaba N16961), this protein is Release factor glutamine methyltransferase.